The sequence spans 468 residues: Siroheme synthase 3 (468 aa).

The interval 1–204 is precorrin-2 dehydrogenase /sirohydrochlorin ferrochelatase; sequence MDYLPIFCRL…GDSASANQLA (204 aa). NAD(+) is bound by residues 22-23 and 43-44; these read EV and PE. Position 128 is a phosphoserine (S128). Residues 216–468 are uroporphyrinogen-III C-methyltransferase; it reads GEVVLVGAGP…GAADAALASA (253 aa). P225 is a binding site for S-adenosyl-L-methionine. The active-site Proton acceptor is the D248. The Proton donor role is filled by K270. S-adenosyl-L-methionine is bound by residues 301–303, I306, 331–332, M383, and G412; these read GGD and TA.

The protein in the N-terminal section; belongs to the precorrin-2 dehydrogenase / sirohydrochlorin ferrochelatase family. In the C-terminal section; belongs to the precorrin methyltransferase family.

It catalyses the reaction uroporphyrinogen III + 2 S-adenosyl-L-methionine = precorrin-2 + 2 S-adenosyl-L-homocysteine + H(+). It carries out the reaction precorrin-2 + NAD(+) = sirohydrochlorin + NADH + 2 H(+). The enzyme catalyses siroheme + 2 H(+) = sirohydrochlorin + Fe(2+). It participates in cofactor biosynthesis; adenosylcobalamin biosynthesis; precorrin-2 from uroporphyrinogen III: step 1/1. The protein operates within cofactor biosynthesis; adenosylcobalamin biosynthesis; sirohydrochlorin from precorrin-2: step 1/1. Its pathway is porphyrin-containing compound metabolism; siroheme biosynthesis; precorrin-2 from uroporphyrinogen III: step 1/1. It functions in the pathway porphyrin-containing compound metabolism; siroheme biosynthesis; siroheme from sirohydrochlorin: step 1/1. It participates in porphyrin-containing compound metabolism; siroheme biosynthesis; sirohydrochlorin from precorrin-2: step 1/1. Functionally, multifunctional enzyme that catalyzes the SAM-dependent methylations of uroporphyrinogen III at position C-2 and C-7 to form precorrin-2 via precorrin-1. Then it catalyzes the NAD-dependent ring dehydrogenation of precorrin-2 to yield sirohydrochlorin. Finally, it catalyzes the ferrochelation of sirohydrochlorin to yield siroheme. In Aeromonas hydrophila subsp. hydrophila (strain ATCC 7966 / DSM 30187 / BCRC 13018 / CCUG 14551 / JCM 1027 / KCTC 2358 / NCIMB 9240 / NCTC 8049), this protein is Siroheme synthase 3.